Reading from the N-terminus, the 303-residue chain is MLLSKAQYDEIALFITTLRPTRQCMRRLKERFPCQSQSTLLSIFSQEYQKLIKRTHAKHHTPEAIEMYYARYLNEVARDPTVPILLELANEVDFSPALIARTVLERFLQDHDGQPPTKPILSSMLRDPSLIPDPVLANQVHLCIINDCCNGPLVDGIKHAIGHEHEVLLRQKLKEHNLAFLDEDQLRLKGYDKTPDVILEVPVAVDGHVIHWIESKASFGDEASHNTYLHDQFWSYWNRFGPGLVIYWYGFIEELDCNRERGILLKDGFPESLVTLGSCMAQNAEHGQHTKSRLSETHQETQS.

Its subcellular location is the nucleus. The protein resides in the cytoplasm. May play a role in erythroid cell differentiation. The sequence is that of CDAN1-interacting nuclease 1 (cdin1) from Xenopus tropicalis (Western clawed frog).